A 411-amino-acid polypeptide reads, in one-letter code: ATPase family AAA domain-containing protein 3C (411 aa).

177-184 (GPPGTGKT) is an ATP binding site.

This sequence belongs to the AAA ATPase family.

In Homo sapiens (Human), this protein is ATPase family AAA domain-containing protein 3C (ATAD3C).